The chain runs to 165 residues: 16S rRNA aminocarboxypropyltransferase (165 aa).

Residues Thr17, Leu62, Leu83, and Thr102 each coordinate S-adenosyl-L-methionine.

Belongs to the TDD superfamily. TSR3 family.

It localises to the cytoplasm. The enzyme catalyses an N(1)-methylpseudouridine in rRNA + S-adenosyl-L-methionine = N(1)-methyl-N(3)-[(3S)-3-amino-3-carboxypropyl]pseudouridine in rRNA + S-methyl-5'-thioadenosine + H(+). Functionally, aminocarboxypropyltransferase that catalyzes the aminocarboxypropyl transfer on pseudouridine corresponding to position 914 in M.jannaschii 16S rRNA. It constitutes the last step in biosynthesis of the hypermodified N1-methyl-N3-(3-amino-3-carboxypropyl) pseudouridine (m1acp3-Psi). The polypeptide is 16S rRNA aminocarboxypropyltransferase (Halobacterium salinarum (strain ATCC 700922 / JCM 11081 / NRC-1) (Halobacterium halobium)).